The sequence spans 584 residues: Eukaryotic translation initiation factor 3 subunit D (584 aa).

Positions 118-184 (IFTRGRGQRG…KDYDKPQRNR (67 aa)) are disordered. Positions 127–167 (GRGGQDTRGGGRQQFQRGGRGGQQYGGGGYSDRGGGRGGGA) are enriched in gly residues. The segment covering 173-184 (GWKDYDKPQRNR) has biased composition (basic and acidic residues). The interval 312 to 326 (ALDMVTVNENAADAP) is RNA gate. Residues 563–584 (PANGLDDDDEGPEPEGVAEEED) are disordered. Acidic residues predominate over residues 567–584 (LDDDDEGPEPEGVAEEED).

Belongs to the eIF-3 subunit D family. Component of the eukaryotic translation initiation factor 3 (eIF-3) complex.

It localises to the cytoplasm. Functionally, mRNA cap-binding component of the eukaryotic translation initiation factor 3 (eIF-3) complex, which is involved in protein synthesis of a specialized repertoire of mRNAs and, together with other initiation factors, stimulates binding of mRNA and methionyl-tRNAi to the 40S ribosome. The eIF-3 complex specifically targets and initiates translation of a subset of mRNAs involved in cell proliferation. In the eIF-3 complex, eif3d specifically recognizes and binds the 7-methylguanosine cap of a subset of mRNAs. This Chaetomium globosum (strain ATCC 6205 / CBS 148.51 / DSM 1962 / NBRC 6347 / NRRL 1970) (Soil fungus) protein is Eukaryotic translation initiation factor 3 subunit D.